The sequence spans 225 residues: UPF0758 protein swp_2203 (225 aa).

The 123-residue stretch at 102 to 224 (ILSDPDLTRD…IVSFAERGWI (123 aa)) folds into the MPN domain. Zn(2+)-binding residues include histidine 173, histidine 175, and aspartate 186. A JAMM motif motif is present at residues 173–186 (HNHPSGIAEPSTAD).

This sequence belongs to the UPF0758 family.

The protein is UPF0758 protein swp_2203 of Shewanella piezotolerans (strain WP3 / JCM 13877).